The sequence spans 947 residues: Zinc finger protein 268 (947 aa).

Positions 81 to 152 (LSFMDVFVDF…QAQVPNQTCP (72 aa)) constitute a KRAB domain. Position 178 is a phosphoserine; by TBK1 (S178). 24 consecutive C2H2-type zinc fingers follow at residues 276–298 (FGCS…QQTH), 304–326 (YGCN…QRIH), 332–354 (HECS…QRIH), 360–382 (YECC…QKTH), 388–410 (YVCN…ERIH), 416–438 (YECN…QRTH), 444–466 (YVCS…QGIH), 472–494 (YGCI…QRSH), 500–522 (YVCN…TRTH), 528–550 (HECN…QRIH), 556–578 (YECH…QRTH), 584–606 (YECT…QRTH), 612–634 (FECS…QRTH), 640–662 (YSCN…KGVH), 668–690 (YGCS…QRSH), 696–718 (YGCS…MRTH), 724–746 (HECR…QRIH), 752–774 (YECS…QRTH), 780–802 (YGCS…MRTH), 808–830 (YECN…ERTH), 836–858 (YKCS…QRMH), 864–886 (YECS…QRTH), 892–914 (YGCN…QRTH), and 920–942 (CKCT…QRTH).

This sequence belongs to the krueppel C2H2-type zinc-finger protein family. As to quaternary structure, interacts (via the KRAB domain) with TRIM28 (via the RBCC domain); the interaction increases ZNF268 nuclear localization activity. Isoform 2 interacts with CHUK and IKBKB; the interaction is further increased in a TNF-alpha-dependent manner. Interacts with TOLLIP; this interaction is impaired by ZNF268 phosphorylation at Ser-178. Forms a ternary complex with TBK1 and SETD4; the interaction between SETD4 and TBK1 is ZNF268-dependent and leads to TBK1 monomethylation. In terms of processing, phosphorylation at Ser-178 stabilizes the protein by interfering with its binding to TOLLIP, hence impairing its degradation by Tollip-mediated selective autophagy system. Overexpressed in ovarian cancer tissues compared to normal ovarian tissues. Isoform 1 and isoform 2 are expressed in squamous epithelium tissues. Isoform 2 is overexpressed in squamous cervical cancer (at protein level). Expressed in blood cells. Isoform 1 is expressed in pancreas, lung, skeletal muscle, heart, placenta, liver, kidney and brain. Isoform 2 expressed in chronic lymphocytic leukemia (CLL) and several tumor cell lines. Isoform 3 is expressed in several tumor cells. Isoform 5 is expressed in fetal liver and several tumor cells. Isoform 6 is weakly expressed in brain, lung amd small intestin and in several tumor cells. Isoform 7 is expressed in fetal liver and several tumor cells.

The protein resides in the nucleus. It localises to the cytoplasm. Acts as a transcriptional repressor. Inhibits erythroid differentiation and tumor cell proliferation. Plays a role during ovarian cancer development and progression. Functionally, contributes to cervical carcinogenesis in part through the TNF-alpha-induced NF-kappa-B signaling pathway by interacting with the I-kappa-B-kinase (IKK) core complex. Its function is as follows. Involved in the regulation of antiviral interferon signaling. During viral infection, recruits SETD4 to TBK1, leading to TBK1 monomethylation, which is critical for the assembly of TBK1 complex and IRF3 signaling. This is Zinc finger protein 268 (ZNF268) from Homo sapiens (Human).